Reading from the N-terminus, the 244-residue chain is uncharacterized protein (244 aa).

Composition is skewed to basic and acidic residues over residues Met1–Thr10 and Gly100–Glu127. 3 disordered regions span residues Met1–Leu79, Gly100–Tyr130, and Thr219–Leu244.

This is an uncharacterized protein from Homo sapiens (Human).